A 92-amino-acid chain; its full sequence is Small ribosomal subunit protein uS19 (92 aa).

It belongs to the universal ribosomal protein uS19 family.

Functionally, protein S19 forms a complex with S13 that binds strongly to the 16S ribosomal RNA. In Neisseria meningitidis serogroup C (strain 053442), this protein is Small ribosomal subunit protein uS19.